A 401-amino-acid chain; its full sequence is Formate-dependent phosphoribosylglycinamide formyltransferase (401 aa).

N(1)-(5-phospho-beta-D-ribosyl)glycinamide-binding positions include 22-23 (EL) and Glu-82. ATP-binding positions include Arg-115, Lys-157, 162–167 (SSGKGQ), 197–200 (EGFI), and Glu-205. In terms of domain architecture, ATP-grasp spans 120–315 (RLAAETLGLP…EFELHARAIL (196 aa)). 2 residues coordinate Mg(2+): Glu-274 and Glu-286. N(1)-(5-phospho-beta-D-ribosyl)glycinamide is bound by residues Asp-293, Lys-362, and 369-370 (RR).

This sequence belongs to the PurK/PurT family. In terms of assembly, homodimer.

It catalyses the reaction N(1)-(5-phospho-beta-D-ribosyl)glycinamide + formate + ATP = N(2)-formyl-N(1)-(5-phospho-beta-D-ribosyl)glycinamide + ADP + phosphate + H(+). The protein operates within purine metabolism; IMP biosynthesis via de novo pathway; N(2)-formyl-N(1)-(5-phospho-D-ribosyl)glycinamide from N(1)-(5-phospho-D-ribosyl)glycinamide (formate route): step 1/1. Functionally, involved in the de novo purine biosynthesis. Catalyzes the transfer of formate to 5-phospho-ribosyl-glycinamide (GAR), producing 5-phospho-ribosyl-N-formylglycinamide (FGAR). Formate is provided by PurU via hydrolysis of 10-formyl-tetrahydrofolate. In Cupriavidus pinatubonensis (strain JMP 134 / LMG 1197) (Cupriavidus necator (strain JMP 134)), this protein is Formate-dependent phosphoribosylglycinamide formyltransferase.